We begin with the raw amino-acid sequence, 79 residues long: MSTAIWILLIVLALIGGLFGGVFIARKQIEKEIGEHPRLTPEAIREMMSQMGQKPSEAKIQQTYRNIVKQSKAAAAKGK.

Residues Ala-4–Ile-24 traverse the membrane as a helical segment.

Belongs to the UPF0154 family.

Its subcellular location is the cell membrane. The sequence is that of UPF0154 protein SUB0399 from Streptococcus uberis (strain ATCC BAA-854 / 0140J).